The following is a 315-amino-acid chain: ATP synthase gamma chain (315 aa).

It belongs to the ATPase gamma chain family. F-type ATPases have 2 components, CF(1) - the catalytic core - and CF(0) - the membrane proton channel. CF(1) has five subunits: alpha(3), beta(3), gamma(1), delta(1), epsilon(1). CF(0) has three main subunits: a, b and c.

It localises to the cellular thylakoid membrane. Functionally, produces ATP from ADP in the presence of a proton gradient across the membrane. The gamma chain is believed to be important in regulating ATPase activity and the flow of protons through the CF(0) complex. In Nostoc punctiforme (strain ATCC 29133 / PCC 73102), this protein is ATP synthase gamma chain.